The chain runs to 413 residues: Probable glucan 1,3-beta-glucosidase ARB_04467 (413 aa).

A signal peptide spans 1-17 (MKFGSLLGLSLVGLSVA). Positions 46, 202, and 262 each coordinate substrate. Residue Glu202 is the Proton donor of the active site. Residues Cys282 and Cys412 are joined by a disulfide bond. Glu300 serves as the catalytic Nucleophile.

The protein belongs to the glycosyl hydrolase 5 (cellulase A) family. In terms of assembly, monomer.

It is found in the secreted. It localises to the cell wall. The enzyme catalyses Successive hydrolysis of beta-D-glucose units from the non-reducing ends of (1-&gt;3)-beta-D-glucans, releasing alpha-glucose.. Functionally, major glucan 1,3-beta-glucosidase required for cell wall integrity. Beta-glucanases participate in the metabolism of beta-glucan, the main structural component of the cell wall. Can also function biosynthetically as a transglycosylase. Functions to deliver glucan from the cell to the extracellular matrix. Involved in cell-substrate and cell-cell adhesion. The protein is Probable glucan 1,3-beta-glucosidase ARB_04467 of Arthroderma benhamiae (strain ATCC MYA-4681 / CBS 112371) (Trichophyton mentagrophytes).